Consider the following 1256-residue polypeptide: MYLYNLTLQRPTSVYQSISGNFSGTKQVEIVLNHGRSLELIRYDENGKMQSVLYTEVFGIVRSIIPFRLTSGTKDYIIVGSDSGRVVILEYNSQKNQFDKIHQETFGRSGCRRIVPGQYLAVDPKGRAFMIGAIEKQKLVYILNRDSSANLTISSPLEAHKSNTIVFSMCGVDVGFDNPIFATISVDYTEEDSSSGGGGGGSIEEMMDEDIGKKKKLLTYYELDLGLNNVVRKWSDQVDDSANIVMTVPGGTEGPGGVLVASEDYIVYRNQDHAEVRSRIPRRYGSDPNKGVLIISHSSHKQKGMFFFLVQSEHGDLYKITLDYQGDQVSEVNVNYFDTIVLANCLTVLKNGFLFAASEFGDHTLYFFKSIGDEEEEGQAKRLEDKDGHLWFTPRNSCGTKMEELKNLEPTSHLSSLSPIIDFKVLDLVREENPQLYSLCGTGLNSSLKVLRHGLSVTTITTANLPGVPSGIWTVPKSTSPNAIDQTDKYIVVSFVGTTSVLSVGDTIQENHESGILETTTTLLVKSMGDDAIIQVFPTGFRHIKSDLRINEWRAPGRKTIVRASANQSQLAIALSGGEIIYFELDQASNLIEIIKKDLRRDIACIEISPIPKGRNMARFIAVSDWEGPIRVLSLDRDNCLGQVSMLDTDKVYIESLSIIEMQLNEMGIETKKSQSQTGQTTTTTTSTSSASSSVTSGGSLFLFVGLKNGVVKRATLDSVTGELSDIRTRLLGRKPVKLFKVKVRGSNAMLALSSRVWLNYINQGKLDIVPLSIEPLENASNLSSEQSAESIVATSENKIIIFSIDKLGDLFNQETIKLNATPKRFIIHPQTSYIIILETETNYNTDNIDIDKINEQSEKLLLEKQKELQQEMDIDDDDQNNNNEIEPFKKLFKPKAGKGKWKSYIKIMDPITHESLESLMLEDGEAGFSVCTCSFGESGEIFLVVGCVTDMVLNPKSHKSAHLNLYRFIDGGKKLELLYKTEVEEPVYAMAQFQGKLVCGVGKSIRIYDMGKKKLLRKCETKNLPNTIVNIHSLGDRLVVGDIQESIHFIKYKRSENMLYVFADDLAPRWMTSSVMLDYDTVAGADKFGNIFVLRLPLLISDEVEEDPTGTKLKFESGTLNGAPHKLDHIANFFVGDTVTTLNKTSLVVGGPEVILYTTISGAIGALIPFTSREDVDFFSTLEMNMRSDCLPLCGRDHLAYRSYYFPVKNIIDGDLCEQFSTLNYQKQLSISEELSRSPSEVIKKLEEIRSQKLL.

The interval 671–696 (TKKSQSQTGQTTTTTTSTSSASSSVT) is disordered. A compositionally biased stretch (low complexity) spans 674 to 696 (SQSQTGQTTTTTTSTSSASSSVT).

This sequence belongs to the RSE1 family. In terms of assembly, identified in the spliceosome A complex; remains associated with the spliceosome throughout the splicing process. Component of the spliceosome B complex. Identified in the spliceosome C complex. Identified in the spliceosome E complex. Component of the U11/U12 snRNPs that are part of the U12-type spliceosome. Component of splicing factor SF3B complex which is composed of at least eight subunits. SF3B associates with the splicing factor SF3A and a 12S RNA unit to form the U2 small nuclear ribonucleoproteins complex (U2 snRNP).

The protein resides in the nucleus. Involved in pre-mRNA splicing as a component of the splicing factor SF3B complex, a constituent of the spliceosome. SF3B complex is required for 'A' complex assembly formed by the stable binding of U2 snRNP to the branchpoint sequence (BPS) in pre-mRNA. Sequence independent binding of SF3A/SF3B complex upstream of the branch site is essential, it may anchor U2 snRNP to the pre-mRNA. May also be involved in the assembly of the 'E' complex. Also belongs to the minor U12-dependent spliceosome, which is involved in the splicing of rare class of nuclear pre-mRNA intron. This is Probable splicing factor 3B subunit 3 (sf3b3) from Dictyostelium discoideum (Social amoeba).